The chain runs to 393 residues: Phosphoglycerate kinase (393 aa).

Substrate is bound by residues 21 to 23, arginine 36, 59 to 62, arginine 114, and arginine 147; these read DMN and HLGR. ATP contacts are provided by residues lysine 198, glutamate 320, and 346–349; that span reads GGDT.

It belongs to the phosphoglycerate kinase family. Monomer.

Its subcellular location is the cytoplasm. It carries out the reaction (2R)-3-phosphoglycerate + ATP = (2R)-3-phospho-glyceroyl phosphate + ADP. Its pathway is carbohydrate degradation; glycolysis; pyruvate from D-glyceraldehyde 3-phosphate: step 2/5. The sequence is that of Phosphoglycerate kinase from Thiobacillus denitrificans (strain ATCC 25259 / T1).